The primary structure comprises 205 residues: Protein TGAM_1450 (205 aa).

Positions 7–201 (EWGEFLVRLA…EEYPRGPVRR (195 aa)) constitute an AMMECR1 domain.

This Thermococcus gammatolerans (strain DSM 15229 / JCM 11827 / EJ3) protein is Protein TGAM_1450.